A 300-amino-acid chain; its full sequence is Acetylglutamate kinase (300 aa).

Substrate contacts are provided by residues 72 to 73, Arg94, and Asn197; that span reads GG.

Belongs to the acetylglutamate kinase family. ArgB subfamily.

The protein resides in the cytoplasm. The enzyme catalyses N-acetyl-L-glutamate + ATP = N-acetyl-L-glutamyl 5-phosphate + ADP. It functions in the pathway amino-acid biosynthesis; L-arginine biosynthesis; N(2)-acetyl-L-ornithine from L-glutamate: step 2/4. Functionally, catalyzes the ATP-dependent phosphorylation of N-acetyl-L-glutamate. The chain is Acetylglutamate kinase from Azoarcus sp. (strain BH72).